A 234-amino-acid chain; its full sequence is LexA repressor (234 aa).

The segment at residues 41-61 (RAEIANELGFKSANAAEEHLQ) is a DNA-binding region (H-T-H motif). Active-site for autocatalytic cleavage activity residues include Ser152 and Lys189.

This sequence belongs to the peptidase S24 family. As to quaternary structure, homodimer.

The catalysed reaction is Hydrolysis of Ala-|-Gly bond in repressor LexA.. Functionally, represses a number of genes involved in the response to DNA damage (SOS response), including recA and lexA. In the presence of single-stranded DNA, RecA interacts with LexA causing an autocatalytic cleavage which disrupts the DNA-binding part of LexA, leading to derepression of the SOS regulon and eventually DNA repair. The sequence is that of LexA repressor from Polaromonas sp. (strain JS666 / ATCC BAA-500).